The chain runs to 428 residues: Elongation factor 1-alpha (428 aa).

Residues 5–225 (KPILNVAFIG…DAFQPPEKPT (221 aa)) form the tr-type G domain. Residues 14-21 (GHVDAGKS) form a G1 region. Residue 14 to 21 (GHVDAGKS) coordinates GTP. Position 21 (serine 21) interacts with Mg(2+). A G2 region spans residues 70–74 (GVTID). The segment at 91-94 (DCPG) is G3. GTP-binding positions include 91–95 (DCPGH) and 149–152 (NKMD). The tract at residues 149–152 (NKMD) is G4. Positions 189-191 (ASL) are G5.

This sequence belongs to the TRAFAC class translation factor GTPase superfamily. Classic translation factor GTPase family. EF-Tu/EF-1A subfamily.

It localises to the cytoplasm. It catalyses the reaction GTP + H2O = GDP + phosphate + H(+). Functionally, GTP hydrolase that promotes the GTP-dependent binding of aminoacyl-tRNA to the A-site of ribosomes during protein biosynthesis. This chain is Elongation factor 1-alpha, found in Methanococcus maripaludis (strain C7 / ATCC BAA-1331).